Reading from the N-terminus, the 343-residue chain is F-box/kelch-repeat protein At3g08810 (343 aa).

Residues 1–15 show a composition bias toward basic residues; the sequence is MSYPERKRKRSRWSK. A disordered region spans residues 1–25; the sequence is MSYPERKRKRSRWSKPHSTQNPSPS. An F-box domain is found at 20–66; the sequence is QNPSPSLPDDVLLSIFARVSRLYYPTLSHVSESFRSLLASPELYKAR. Kelch repeat units follow at residues 134 to 181, 183 to 224, and 225 to 271; these read DIYN…VRDG, QGGH…LPDS, and YCVI…VILA.

This is F-box/kelch-repeat protein At3g08810 from Arabidopsis thaliana (Mouse-ear cress).